Reading from the N-terminus, the 921-residue chain is MEGHGPQKSSPLARDLTRAFNGYHKQTVLLKKNLKETHAFFREMRQNYSNTCASSTLSSDSASLETSQFSCISFPSHEEEFLRNTVGAAPYILVLGQDCAARYQLLNCLLGERLLPLGPQAGHACHGGQGSTCKRRKLCFTHGKQTRLSLALPGQYELVHQLVANCGRWDTVPREDLEILDECEDPAHRQAELEITLHHPMLQEAKVMVVPCPSVQPIEEAIEDCTRSAIPIVLYAVNQDSLSSEQVADLWKVKEILSFPICFVRLPNLSEDSSEPGQRFEKDKSKLQKQLLSHGLLTCPMGNCSCGAPTQMPTPGAKPQSVLGENFERLHRILVPFTRQVLQNQQVEAASLLNGLHCRCLDLFINQAFDMQRDLQITPRRLEYTREKEGELFTSLMAIANRKQEEMKDMIVETLGSMKEQLLEDAANLEFTDIIVTTNGDPVTSKEIKSCIHQIQDLIVVRLNQAVANKLISSVDYLRESFVGTLERCLDSLEKSHIESSVHNITSNHLKQLLNAAYHVEVTFHSGSSVTRLFWEQIKQIIHRITFVNPPAITPEWKRKVAQDAIESLSAAKLARSICSQFRTRLNSSHEAFAASLRQLEERHTGRLERTEDLWLRVRKDHAPRLARLSLESRSLRDVLLHGKPKLGRELGRGQYGVVYLCDNWGGHYPCALKSVVPPDDKHWNDLALEFHYTRTLPKHERLVDLHGSVIDHTYAGGSSIAVLLIMERLHRDLYTGLKAGLSLQERLQIALDVVEGIRFLHNQGLLHRDIKLKNVLLDKQNRAKITDLGFCKPEAMMSGSIVGTPIHMAPELFTGKYDNSVDVYAFGILFWYLCAGSVKLPEAFEKCSSKDQLWNNVKKGARPERLPCFDEECWQLMEACWNGDPSQRPLLGIVEPSLQSMMVRLCCGSEQKSSSLEDSS.

The Protein kinase domain maps to 645-899 (PKLGRELGRG…PLLGIVEPSL (255 aa)). Residues 651-659 (LGRGQYGVV) and Lys674 each bind ATP. The Proton acceptor role is filled by Asp770.

The protein belongs to the protein kinase superfamily. Ser/Thr protein kinase family.

The protein resides in the cytoplasm. It localises to the cell membrane. Its subcellular location is the apical cell membrane. It is found in the basolateral cell membrane. The protein localises to the cell junction. The catalysed reaction is L-seryl-[protein] + ATP = O-phospho-L-seryl-[protein] + ADP + H(+). It catalyses the reaction L-threonyl-[protein] + ATP = O-phospho-L-threonyl-[protein] + ADP + H(+). It carries out the reaction L-tyrosyl-[protein] + ATP = O-phospho-L-tyrosyl-[protein] + ADP + H(+). Functionally, may act as a positive regulator of ERK phosphorylation downstream of fibroblast growth factor-receptor activation. May induce both caspase-dependent apoptosis and caspase-independent cell death. May play a role in the embryonic development. This chain is Dual serine/threonine and tyrosine protein kinase (dstyk), found in Takifugu rubripes (Japanese pufferfish).